A 333-amino-acid chain; its full sequence is Sodium/bile acid cotransporter 7 (333 aa).

The Cytoplasmic segment spans residues Met1–Glu10. The helical transmembrane segment at Trp11–Val31 threads the bilayer. At Lys32–Lys37 the chain is on the extracellular side. The helical transmembrane segment at Pro38–Leu58 threads the bilayer. The Cytoplasmic portion of the chain corresponds to Lys59–Lys71. A helical membrane pass occupies residues Leu72 to Leu92. The Extracellular segment spans residues Gln93 to Trp103. A helical membrane pass occupies residues Leu104–Leu124. Topologically, residues Thr125–Lys126 are cytoplasmic. The helical transmembrane segment at Ala127 to Gly147 threads the bilayer. Over Ser148–Ser151 the chain is Extracellular. A helical membrane pass occupies residues Val152–Gly172. The Cytoplasmic segment spans residues Gln173–Pro189. A helical membrane pass occupies residues Phe190–Phe210. Topologically, residues Ala211–Leu222 are extracellular. A helical transmembrane segment spans residues Ile223–Phe243. Topologically, residues Ser244–Ala258 are cytoplasmic. The helical transmembrane segment at Ile259–Phe279 threads the bilayer. The Extracellular segment spans residues Ala280–Ser286. The helical transmembrane segment at Leu287 to Val307 threads the bilayer. Residues Pro308–Val333 are Cytoplasmic-facing.

It belongs to the bile acid:sodium symporter (BASS) (TC 2.A.28) family.

It localises to the cell membrane. The protein localises to the endoplasmic reticulum membrane. The protein resides in the golgi apparatus membrane. Involved in teeth and skeletal development. Has an essential role in the biosynthesis and trafficking of glycosaminoglycans and glycoproteins to produce a proper functioning extracellular matrix. Required for extracellular matrix mineralization. Also involved in the regulation of cellular calcium homeostasis. Does not show transport activity towards bile acids or steroid sulfates. The sequence is that of Sodium/bile acid cotransporter 7 (SLC10A7) from Gallus gallus (Chicken).